Consider the following 319-residue polypeptide: ATP-dependent 6-phosphofructokinase (319 aa).

Gly-11 contributes to the ATP binding site. ADP is bound at residue 21–25 (RAVVR). ATP-binding positions include 72–73 (RC) and 102–105 (GDGS). Position 103 (Asp-103) interacts with Mg(2+). Residue 125 to 127 (TID) participates in substrate binding. The active-site Proton acceptor is Asp-127. Arg-154 contacts ADP. Substrate contacts are provided by residues Arg-162 and 169-171 (MGR). ADP is bound by residues 185–187 (GAE), Arg-211, and 213–215 (KKH). Substrate-binding positions include Glu-222, Arg-243, and 249-252 (HVQR).

The protein belongs to the phosphofructokinase type A (PFKA) family. ATP-dependent PFK group I subfamily. Prokaryotic clade 'B1' sub-subfamily. As to quaternary structure, homotetramer. Requires Mg(2+) as cofactor.

It is found in the cytoplasm. The catalysed reaction is beta-D-fructose 6-phosphate + ATP = beta-D-fructose 1,6-bisphosphate + ADP + H(+). The protein operates within carbohydrate degradation; glycolysis; D-glyceraldehyde 3-phosphate and glycerone phosphate from D-glucose: step 3/4. Allosterically activated by ADP and other diphosphonucleosides, and allosterically inhibited by phosphoenolpyruvate. Functionally, catalyzes the phosphorylation of D-fructose 6-phosphate to fructose 1,6-bisphosphate by ATP, the first committing step of glycolysis. This is ATP-dependent 6-phosphofructokinase from Bacillus mycoides (strain KBAB4) (Bacillus weihenstephanensis).